We begin with the raw amino-acid sequence, 101 residues long: Small ribosomal subunit protein bS18c (101 aa).

Residues 1–19 (MDKSKRLFRKSKRSFRRRL) are compositionally biased toward basic residues. The disordered stretch occupies residues 1 to 23 (MDKSKRLFRKSKRSFRRRLPPIG).

The protein belongs to the bacterial ribosomal protein bS18 family. Part of the 30S ribosomal subunit.

Its subcellular location is the plastid. It is found in the chloroplast. In Liriodendron tulipifera (Tuliptree), this protein is Small ribosomal subunit protein bS18c.